Here is a 678-residue protein sequence, read N- to C-terminus: UvrABC system protein C (678 aa).

The region spanning valine 16–isoleucine 95 is the GIY-YIG domain. Residues aspartate 208–alanine 243 form the UVR domain. Residues histidine 477–arginine 508 form a disordered region. A compositionally biased stretch (basic and acidic residues) spans arginine 479–glutamine 491.

It belongs to the UvrC family. Interacts with UvrB in an incision complex.

It localises to the cytoplasm. Functionally, the UvrABC repair system catalyzes the recognition and processing of DNA lesions. UvrC both incises the 5' and 3' sides of the lesion. The N-terminal half is responsible for the 3' incision and the C-terminal half is responsible for the 5' incision. The sequence is that of UvrABC system protein C from Mycolicibacterium vanbaalenii (strain DSM 7251 / JCM 13017 / BCRC 16820 / KCTC 9966 / NRRL B-24157 / PYR-1) (Mycobacterium vanbaalenii).